Here is a 549-residue protein sequence, read N- to C-terminus: CTP synthase (549 aa).

The segment at 1–267 is amidoligase domain; it reads MAKFVFITGG…CREVLDVLNL (267 aa). Residue Ser-13 participates in CTP binding. Ser-13 is a UTP binding site. ATP is bound by residues 14–19 and Asp-71; that span reads SIGKGI. Residues Asp-71 and Glu-141 each contribute to the Mg(2+) site. Residues 148 to 150, 188 to 193, and Lys-224 each bind CTP; these read DIE and KTKPTQ. Residues 188-193 and Lys-224 each bind UTP; that span reads KTKPTQ. In terms of domain architecture, Glutamine amidotransferase type-1 spans 292 to 534; that stretch reads KIALVGKYVQ…IEAAQQRLPD (243 aa). Gly-354 provides a ligand contact to L-glutamine. Residue Cys-381 is the Nucleophile; for glutamine hydrolysis of the active site. L-glutamine is bound by residues 382–385, Glu-405, and Arg-462; that span reads LGMQ. Catalysis depends on residues His-507 and Glu-509.

This sequence belongs to the CTP synthase family. Homotetramer.

The catalysed reaction is UTP + L-glutamine + ATP + H2O = CTP + L-glutamate + ADP + phosphate + 2 H(+). The enzyme catalyses L-glutamine + H2O = L-glutamate + NH4(+). It catalyses the reaction UTP + NH4(+) + ATP = CTP + ADP + phosphate + 2 H(+). Its pathway is pyrimidine metabolism; CTP biosynthesis via de novo pathway; CTP from UDP: step 2/2. With respect to regulation, allosterically activated by GTP, when glutamine is the substrate; GTP has no effect on the reaction when ammonia is the substrate. The allosteric effector GTP functions by stabilizing the protein conformation that binds the tetrahedral intermediate(s) formed during glutamine hydrolysis. Inhibited by the product CTP, via allosteric rather than competitive inhibition. Catalyzes the ATP-dependent amination of UTP to CTP with either L-glutamine or ammonia as the source of nitrogen. Regulates intracellular CTP levels through interactions with the four ribonucleotide triphosphates. The protein is CTP synthase of Synechococcus sp. (strain CC9605).